Consider the following 342-residue polypeptide: Putative ABC transporter anion-binding protein HVO_1888 (342 aa).

The segment at residues 1 to 32 is a signal peptide (tat-type signal); the sequence is MAIERRRFLQAAGVGAVLGLSGCTGNTSPPQA. Over residues 24 to 37 the composition is skewed to polar residues; it reads TGNTSPPQANNETA. Residues 24 to 52 form a disordered region; the sequence is TGNTSPPQANNETAEGSGGSESGDGSTQE.

As to quaternary structure, the complex is composed of two ATP-binding proteins (HVO_1886), two transmembrane proteins (HVO_1887) and a solute-binding protein (HVO_1888). Post-translationally, predicted to be exported by the Tat system. The position of the signal peptide cleavage has not been experimentally proven.

Its function is as follows. Part of an ABC transporter complex involved in anions import. This is Putative ABC transporter anion-binding protein HVO_1888 from Haloferax volcanii (strain ATCC 29605 / DSM 3757 / JCM 8879 / NBRC 14742 / NCIMB 2012 / VKM B-1768 / DS2) (Halobacterium volcanii).